A 317-amino-acid polypeptide reads, in one-letter code: Melanocyte-stimulating hormone receptor (317 aa).

The Extracellular segment spans residues 1-37 (MPAQGSQRGLLGAVNFTPTATPHLRPAANQTGPQCLE). N-linked (GlcNAc...) asparagine glycosylation occurs at Asn-29. Residues 38–63 (VSVPDGLFLCLGLVSLVENTLVVAAI) traverse the membrane as a helical segment. At 64-72 (AKNRNLHSP) the chain is on the cytoplasmic side. Residues 73–93 (MYCFICCLALSDLLVSVSNLL) form a helical membrane-spanning segment. The Extracellular segment spans residues 94–118 (ETAVLLLLEVGALAAQATVVQQLGN). Residues 119-140 (VIDVLICSSMVSSLCSLGAIAM) traverse the membrane as a helical segment. Over 141–163 (DRYISIFYALRYHSIVTLARARR) the chain is Cytoplasmic. A helical membrane pass occupies residues 164-183 (AIAAVWAASILSSTLFITYY). At 184-191 (DRTAALLC) the chain is on the extracellular side. The helical transmembrane segment at 192–211 (LVVFFLAMLVLMALLYVHML) threads the bilayer. Topologically, residues 212-240 (IQACQHAQAIARLHKRQHPVQQGWGLKGA) are cytoplasmic. The chain crosses the membrane as a helical span at residues 241–266 (ATLTILLGVFFLCWGPFFLHLTLIAV). The Extracellular segment spans residues 267 to 279 (CPQHPTCSCIFKN). Residues 280–300 (FRLFLALIICNTIVDPLIYAF) traverse the membrane as a helical segment. Residues 301-317 (RSQELRRTLKEVLLFSW) are Cytoplasmic-facing.

This sequence belongs to the G-protein coupled receptor 1 family. Interacts with MGRN1, but does not undergo MGRN1-mediated ubiquitination; this interaction competes with GNAS-binding and thus inhibits agonist-induced cAMP production. Interacts with OPN3; the interaction results in a decrease in MC1R-mediated cAMP signaling and ultimately a decrease in melanin production in melanocytes.

The protein resides in the cell membrane. Receptor for MSH (alpha, beta and gamma) and ACTH. The activity of this receptor is mediated by G proteins which activate adenylate cyclase. Mediates melanogenesis, the production of eumelanin (black/brown) and phaeomelanin (red/yellow), via regulation of cAMP signaling in melanocytes. The polypeptide is Melanocyte-stimulating hormone receptor (MC1R) (Eulemur fulvus fulvus (Brown lemur)).